We begin with the raw amino-acid sequence, 544 residues long: Cytochrome P450 2U1 (544 aa).

The next 4 membrane-spanning stretches (helical) occupy residues Leu30–Trp50, Val113–Phe133, Ile261–Phe281, and Leu342–Leu362. Cys490 is a heme binding site. A helical transmembrane segment spans residues Leu495–Leu515.

Belongs to the cytochrome P450 family. It depends on heme as a cofactor. Widely expressed with stronger expression in thymus, heart and cerebellum.

Its subcellular location is the endoplasmic reticulum membrane. It localises to the microsome membrane. The protein resides in the mitochondrion inner membrane. The catalysed reaction is an omega-methyl-long-chain fatty acid + reduced [NADPH--hemoprotein reductase] + O2 = an omega-hydroxy-long-chain fatty acid + oxidized [NADPH--hemoprotein reductase] + H2O + H(+). It catalyses the reaction (5Z,8Z,11Z,14Z)-eicosatetraenoate + reduced [NADPH--hemoprotein reductase] + O2 = 19-hydroxy-(5Z,8Z,11Z,14Z)-eicosatetraenoate + oxidized [NADPH--hemoprotein reductase] + H2O + H(+). It carries out the reaction (5Z,8Z,11Z,14Z)-eicosatetraenoate + reduced [NADPH--hemoprotein reductase] + O2 = 20-hydroxy-(5Z,8Z,11Z,14Z)-eicosatetraenoate + oxidized [NADPH--hemoprotein reductase] + H2O + H(+). The enzyme catalyses N-[(5Z,8Z,11Z,14Z)-eicosatetraenoyl]-serotonin + reduced [NADPH--hemoprotein reductase] + O2 = 2-oxo-N-[(5Z,8Z,11Z,14Z)-eicosatetraenoyl]-serotonin + oxidized [NADPH--hemoprotein reductase] + H2O + H(+). Its pathway is lipid metabolism; arachidonate metabolism. In terms of biological role, a cytochrome P450 monooxygenase involved in the metabolism of arachidonic acid and its conjugates. Mechanistically, uses molecular oxygen inserting one oxygen atom into a substrate, and reducing the second into a water molecule, with two electrons provided by NADPH via cytochrome P450 reductase (CPR; NADPH-ferrihemoprotein reductase). Acts as an omega and omega-1 hydroxylase for arachidonic acid and possibly for other long chain fatty acids. May modulate the arachidonic acid signaling pathway and play a role in other fatty acid signaling processes. May down-regulate the biological activities of N-arachidonoyl-serotonin, an endocannabinoid that has anti-nociceptive effects through inhibition of fatty acid amide hydrolase FAAH, TRPV1 receptor and T-type calcium channels. Catalyzes C-2 oxidation of the indole ring of N-arachidonoyl-serotonin forming a less active product 2-oxo-N-arachidonoyl-serotonin. The chain is Cytochrome P450 2U1 from Homo sapiens (Human).